The primary structure comprises 570 residues: MSEKHPGPLVVEGKLSDAERMKLESNYLRGTIAEDLNDGLTGGFKGDNFLLIRFHGMYQQDDRDIRAERAAQKLEPRHAMLLRCRLPGGVITTTQWQAIDKFAADNTIYGSIRLTNRQTFQFHGILKKNVKPVHQMLHSVGLDALATANDMNRNVLCTSNPYESQLHAEAYEWAKKISEHLLPRTRAYAEIWLDQEKVATTDEEPILGQTYLPRKFKTTVVIPPQNDIDLHANDMNFVAIAENGKLVGFNLLVGGGLSIEHGNKKTYARTASEFGYLPLEHTLAVAEAVVTTQRDWGNRTDRKNAKTKYTLERVGLETFKAEVERRAGIKFEPIRPYEFTGRGDRIGWVKGIDDKWHLTLFIENGRILDYPGRPLKTGLLEIAKIHQGEFRITANQNLIIASVPESQKAKIETLARDHGLMNAVKPQRENSMACVSFPTCPLAMAEAERFLPSFTDKVEAILEKHGIPDEHIVMRVTGCPNGCGRAMLAEIGLVGKAPGRYNLHLGGNRIGSRIPRMYKENIAEPDILASLDELIGRWAKEREAGEGFGDFTVRAGIIRPVLDPARDFWE.

4 residues coordinate [4Fe-4S] cluster: cysteine 434, cysteine 440, cysteine 479, and cysteine 483. Cysteine 483 lines the siroheme pocket.

This sequence belongs to the nitrite and sulfite reductase 4Fe-4S domain family. Alpha(8)-beta(8). The alpha component is a flavoprotein, the beta component is a hemoprotein. The cofactor is siroheme. Requires [4Fe-4S] cluster as cofactor.

It carries out the reaction hydrogen sulfide + 3 NADP(+) + 3 H2O = sulfite + 3 NADPH + 4 H(+). The protein operates within sulfur metabolism; hydrogen sulfide biosynthesis; hydrogen sulfide from sulfite (NADPH route): step 1/1. In terms of biological role, component of the sulfite reductase complex that catalyzes the 6-electron reduction of sulfite to sulfide. This is one of several activities required for the biosynthesis of L-cysteine from sulfate. This Salmonella typhimurium (strain LT2 / SGSC1412 / ATCC 700720) protein is Sulfite reductase [NADPH] hemoprotein beta-component (cysI).